Here is a 120-residue protein sequence, read N- to C-terminus: Ribosomal protein eL22-like 1 (120 aa).

This sequence belongs to the eukaryotic ribosomal protein eL22 family.

The chain is Ribosomal protein eL22-like 1 (rpl22l1) from Xenopus tropicalis (Western clawed frog).